Here is a 340-residue protein sequence, read N- to C-terminus: MKATMVLTPLALAMAAVLSVSAYAGNEGGWHPPKPNPQSNNKGGATALVVDTQQNYNNKVSNFGTLNNASVSGSIKDASGNVGVNVAAGDNNQQANAAALASADASFVFGTATASTSVLQSGYGNTLNNYSNPNTASLSNSANNVSGNLGVNVAAGNFNQQKNDLAAAVSNGQYSTAGSAASQTSTGNTTVNSANYAYGGTYVSLKLNADGSYKGTSDQIGDVYLDTWEGQTHPGGSNTGHIDVDSQAQGAKDLNHDGGAFAFKEKGDVDLKGTVSGFIPAIVGFKTPVTNNASLSNSLQNVSGNVGVNIAAGGGNQQSNSLSIAAGCSSCPAGGESLGF.

The first 24 residues, 1-24 (MKATMVLTPLALAMAAVLSVSAYA), serve as a signal peptide directing secretion. The FapC_R1 repeat unit spans residues 67-100 (NNASVSGSIKDASGNVGVNVAAGDNNQQANAAAL). Residues 101 to 133 (ASADASFVFGTATASTSVLQSGYGNTLNNYSNP) form a linker 1 region. The FapC_R2 repeat unit spans residues 134–167 (NTASLSNSANNVSGNLGVNVAAGNFNQQKNDLAA). Residues 168-290 (AVSNGQYSTA…AIVGFKTPVT (123 aa)) are linker 2. The FapC_R3 repeat unit spans residues 291–324 (NNASLSNSLQNVSGNVGVNIAAGGGNQQSNSLSI). A Cys-X-X-Cys motif is present at residues 328 to 331 (CSSC).

The protein belongs to the FapB/FapC family. In terms of assembly, the major component of purified amyloid fibrils. Fibrils are resistant to boiling in 2% (weight/vol) SDS and require &gt;90% (vol/vol) formic acid to dissolve. Interacts with FapA in vitro.

It localises to the fimbrium. The protein resides in the secreted. Functionally, the major functional amyloid subunit in this bacterium. Upon overexpression of the endogenous six-gene locus (fapA-fapF), cells form large clumps during liquid growth, make large amounts of biofilm and produce amyloid fibrils. The polypeptide is Functional amyloid subunit FapC (Pseudomonas aeruginosa (strain ATCC 15692 / DSM 22644 / CIP 104116 / JCM 14847 / LMG 12228 / 1C / PRS 101 / PAO1)).